The sequence spans 275 residues: Adaptin ear-binding coat-associated protein 1 (275 aa).

The interval 168–275 (AKKGGASKPR…APQPSNWVQF (108 aa)) is disordered. Pro residues predominate over residues 187–201 (LPPPPGGKVTIPPPS). Residue Thr-211 is modified to Phosphothreonine. Low complexity predominate over residues 233 to 248 (SPAPVSTSAPAPVSTS). Short sequence motifs (WXXF motif) lie at residues 252–255 (WGDF) and 272–275 (WVQF). The span at 256 to 275 (STASSSVPNQAPQPSNWVQF) shows a compositional bias: polar residues.

This sequence belongs to the NECAP family. Interacts with AP1G1 and AP2A1 components of the adapter protein complexes AP-1 and AP-2. Interacts with the GAE domain proteins GGA1, GGA2 and GGA3. In terms of tissue distribution, expressed primarily in brain (at protein level).

The protein localises to the cytoplasmic vesicle. Its subcellular location is the clathrin-coated vesicle membrane. It is found in the cell membrane. Functionally, involved in endocytosis. The chain is Adaptin ear-binding coat-associated protein 1 (Necap1) from Mus musculus (Mouse).